The chain runs to 300 residues: 33 kDa chaperonin (300 aa).

2 disulfide bridges follow: Cys-240–Cys-242 and Cys-273–Cys-276.

This sequence belongs to the HSP33 family. In terms of processing, under oxidizing conditions two disulfide bonds are formed involving the reactive cysteines. Under reducing conditions zinc is bound to the reactive cysteines and the protein is inactive.

The protein resides in the cytoplasm. Functionally, redox regulated molecular chaperone. Protects both thermally unfolding and oxidatively damaged proteins from irreversible aggregation. Plays an important role in the bacterial defense system toward oxidative stress. This Cyanothece sp. (strain PCC 7425 / ATCC 29141) protein is 33 kDa chaperonin.